A 241-amino-acid chain; its full sequence is Enolase-phosphatase E1 (241 aa).

Asp-9 and Glu-11 together coordinate Mg(2+). Substrate-binding positions include 133-134 (SS) and Lys-172. Residue Asp-198 coordinates Mg(2+).

This sequence belongs to the HAD-like hydrolase superfamily. MasA/MtnC family. Monomer. Mg(2+) is required as a cofactor.

The protein localises to the cytoplasm. The protein resides in the nucleus. The enzyme catalyses 5-methylsulfanyl-2,3-dioxopentyl phosphate + H2O = 1,2-dihydroxy-5-(methylsulfanyl)pent-1-en-3-one + phosphate. It functions in the pathway amino-acid biosynthesis; L-methionine biosynthesis via salvage pathway; L-methionine from S-methyl-5-thio-alpha-D-ribose 1-phosphate: step 3/6. Its pathway is amino-acid biosynthesis; L-methionine biosynthesis via salvage pathway; L-methionine from S-methyl-5-thio-alpha-D-ribose 1-phosphate: step 4/6. In terms of biological role, bifunctional enzyme that catalyzes the enolization of 2,3-diketo-5-methylthiopentyl-1-phosphate (DK-MTP-1-P) into the intermediate 2-hydroxy-3-keto-5-methylthiopentenyl-1-phosphate (HK-MTPenyl-1-P), which is then dephosphorylated to form the acireductone 1,2-dihydroxy-3-keto-5-methylthiopentene (DHK-MTPene). This chain is Enolase-phosphatase E1, found in Scheffersomyces stipitis (strain ATCC 58785 / CBS 6054 / NBRC 10063 / NRRL Y-11545) (Yeast).